Here is a 282-residue protein sequence, read N- to C-terminus: NADPH-dependent 7-cyano-7-deazaguanine reductase (282 aa).

A substrate-binding site is contributed by isoleucine 88–serine 90. Position 90-91 (serine 90–lysine 91) interacts with NADPH. Cysteine 190 (thioimide intermediate) is an active-site residue. Catalysis depends on aspartate 197, which acts as the Proton donor. Histidine 229 to glutamate 230 contacts substrate. Residue arginine 258–glycine 259 participates in NADPH binding.

The protein belongs to the GTP cyclohydrolase I family. QueF type 2 subfamily. Homodimer.

It is found in the cytoplasm. It catalyses the reaction 7-aminomethyl-7-carbaguanine + 2 NADP(+) = 7-cyano-7-deazaguanine + 2 NADPH + 3 H(+). The protein operates within tRNA modification; tRNA-queuosine biosynthesis. Catalyzes the NADPH-dependent reduction of 7-cyano-7-deazaguanine (preQ0) to 7-aminomethyl-7-deazaguanine (preQ1). In Salmonella schwarzengrund (strain CVM19633), this protein is NADPH-dependent 7-cyano-7-deazaguanine reductase.